A 102-amino-acid chain; its full sequence is ATP-dependent Clp protease adapter protein ClpS (102 aa).

It belongs to the ClpS family. In terms of assembly, binds to the N-terminal domain of the chaperone ClpA.

In terms of biological role, involved in the modulation of the specificity of the ClpAP-mediated ATP-dependent protein degradation. This Aromatoleum aromaticum (strain DSM 19018 / LMG 30748 / EbN1) (Azoarcus sp. (strain EbN1)) protein is ATP-dependent Clp protease adapter protein ClpS.